The sequence spans 153 residues: Ribonuclease H (153 aa).

The region spanning 1–141 is the RNase H type-1 domain; sequence MKLVEIFTDG…CDELAKAGAN (141 aa). Asp-9, Glu-47, Asp-69, and Asp-133 together coordinate Mg(2+).

The protein belongs to the RNase H family. As to quaternary structure, monomer. Mg(2+) serves as cofactor.

It is found in the cytoplasm. The catalysed reaction is Endonucleolytic cleavage to 5'-phosphomonoester.. Its function is as follows. Endonuclease that specifically degrades the RNA of RNA-DNA hybrids. This Actinobacillus pleuropneumoniae serotype 5b (strain L20) protein is Ribonuclease H.